The sequence spans 324 residues: Phospho-N-acetylmuramoyl-pentapeptide-transferase (324 aa).

Helical transmembrane passes span 5 to 25 (GLLVTAGVAFLISVALSPLFI), 52 to 72 (PTMGGIVIYVSMMVTSLIMAI), 77 to 97 (LGAEVSLLLLVTFGYGLIGFL), 122 to 142 (VIAIAFFLIGKGQAFHTYIMI), 149 to 169 (FELGWAYFVLVLFMLIGGSNA), 176 to 196 (LDGLLSGTAAIAFGAFSIIAV), 201 to 221 (FGVAIFCMAVVGAVLGFLVFN), 227 to 247 (VFMGDTGSLALGGAIAAVAIL), 253 to 273 (LLVIIGGVFVMETLSVIIQVI), and 302 to 322 (VVVTFWSVGFLLAVLGIYIGV).

It belongs to the glycosyltransferase 4 family. MraY subfamily. The cofactor is Mg(2+).

It localises to the cell membrane. The catalysed reaction is UDP-N-acetyl-alpha-D-muramoyl-L-alanyl-gamma-D-glutamyl-meso-2,6-diaminopimeloyl-D-alanyl-D-alanine + di-trans,octa-cis-undecaprenyl phosphate = di-trans,octa-cis-undecaprenyl diphospho-N-acetyl-alpha-D-muramoyl-L-alanyl-D-glutamyl-meso-2,6-diaminopimeloyl-D-alanyl-D-alanine + UMP. The protein operates within cell wall biogenesis; peptidoglycan biosynthesis. Its function is as follows. Catalyzes the initial step of the lipid cycle reactions in the biosynthesis of the cell wall peptidoglycan: transfers peptidoglycan precursor phospho-MurNAc-pentapeptide from UDP-MurNAc-pentapeptide onto the lipid carrier undecaprenyl phosphate, yielding undecaprenyl-pyrophosphoryl-MurNAc-pentapeptide, known as lipid I. This chain is Phospho-N-acetylmuramoyl-pentapeptide-transferase, found in Bacillus cereus (strain AH820).